Reading from the N-terminus, the 781-residue chain is MHDECTPQQTMSSIQDTKAADIAARGELNVIETATVSPTNGEESHYTNQVQLEKNKTHMSSALVEKENNTSLNGRVLGQEESQNKMFPDNAENEDDKQIEHMTVENINGNREETHGIIQTTETEIQETSESPREEMTTSSIICDISKKYINSTLPNDSENIKHKNNIMEKEYLDVLSDVTGPQVSCYITAPSYVLQQLECRIINHMSSLIVGDNEELVSNVITIECSDKEKRVPFPIGIAIPFTARYRGNYRDIMVKVCDINLQSSYLNPNSLEGMKGGYKGTCASVKVYKLGIFSVVSCLKKESFTVTKKGLALKSSMDSRISLNYPPGVFTSPVLVQLKIQPVDPALVAHLKAQQDTFYSVQSTSPLIHIQHPSTYPFQKPVTLFLPCSPYLDKNNLGSEIDHKRRASATINRITPSYFNRTKIASIRKPRKNASECLKLLGFRSQDSGWCGLDDVVKTIQSGLVSVELYEHLERFIVLHLSSTMDNSHLVTFVKSLEEAMLSTTACIVLSHQKDNPHRIAVLVVPSKDLSQVLKDLHLEGFGGPPEPSRHFQVREGEQLLLRFTGNIFASSNGKDYGKDYTLIFHLQRKPRLELQIKEVDEFGNYSCPHYKGTIVVYKVPKGKIVPNLNQSLVINENHSQLPICKLPLKLPKHKKLINRPQSTKRVSKDPVEALWDNLLHWLAEELSEENAESLSSTLPLRRSTIQLIKLKNPDDLTEQIHEFLCFWKKSLPTFTDKLRLLARHLRKIGRSDLAEELKFKWENKVFTEPQQCFDVAPE.

ZU5 domains lie at 167-301 (IMEK…VSCL) and 302-483 (KKES…VLHL). The 86-residue stretch at 679 to 764 (DNLLHWLAEE…DLAEELKFKW (86 aa)) folds into the Death domain.

The chain is Death domain-containing protein 1 (DTHD1) from Homo sapiens (Human).